Consider the following 337-residue polypeptide: NADH-quinone oxidoreductase subunit H (337 aa).

8 consecutive transmembrane segments (helical) span residues 13-33 (IIIV…IAYL), 82-102 (AVFI…WAVI), 115-135 (VGVL…IMAG), 154-174 (MVSY…SAGS), 187-207 (GVWY…SILA), 248-268 (ILMS…PVDI), 274-294 (IPGI…FLWV), and 313-333 (VFLP…VTFD).

Belongs to the complex I subunit 1 family. In terms of assembly, NDH-1 is composed of 14 different subunits. Subunits NuoA, H, J, K, L, M, N constitute the membrane sector of the complex.

Its subcellular location is the cell inner membrane. The enzyme catalyses a quinone + NADH + 5 H(+)(in) = a quinol + NAD(+) + 4 H(+)(out). NDH-1 shuttles electrons from NADH, via FMN and iron-sulfur (Fe-S) centers, to quinones in the respiratory chain. The immediate electron acceptor for the enzyme in this species is believed to be ubiquinone. Couples the redox reaction to proton translocation (for every two electrons transferred, four hydrogen ions are translocated across the cytoplasmic membrane), and thus conserves the redox energy in a proton gradient. This subunit may bind ubiquinone. This chain is NADH-quinone oxidoreductase subunit H, found in Rhodospirillum rubrum (strain ATCC 11170 / ATH 1.1.1 / DSM 467 / LMG 4362 / NCIMB 8255 / S1).